The primary structure comprises 354 residues: Arginase (354 aa).

Residues histidine 136, aspartate 159, histidine 161, and aspartate 163 each contribute to the Mn(2+) site. Asparagine 165, serine 172, and aspartate 217 together coordinate L-arginine. Mn(2+) is bound by residues aspartate 266 and aspartate 268.

It belongs to the arginase family. As to quaternary structure, homotrimer; oligomerization is dependent on Mn(2+) binding. Mn(2+) serves as cofactor.

The enzyme catalyses L-arginine + H2O = urea + L-ornithine. It participates in nitrogen metabolism; urea cycle; L-ornithine and urea from L-arginine: step 1/1. Catalyzes the hydrolysis of L-arginine into urea and L-ornithine, which is a precursor for polyamine biosynthesis. May play a role in parasite intra-hepatic development during the host liver stage. This chain is Arginase, found in Plasmodium berghei (strain Anka).